The chain runs to 117 residues: Large ribosomal subunit protein bL19 (117 aa).

The protein belongs to the bacterial ribosomal protein bL19 family.

Functionally, this protein is located at the 30S-50S ribosomal subunit interface and may play a role in the structure and function of the aminoacyl-tRNA binding site. This is Large ribosomal subunit protein bL19 from Leptothrix cholodnii (strain ATCC 51168 / LMG 8142 / SP-6) (Leptothrix discophora (strain SP-6)).